Consider the following 166-residue polypeptide: HTH-type transcriptional regulator PetP (166 aa).

Residues 17-152 enclose the HTH marR-type domain; it reads DEQLRKGIEA…FRQVLEAMMD (136 aa). The H-T-H motif DNA-binding region spans 66–89; that stretch reads VTTLISVLGVTKQSLNRVLRTLID.

In terms of biological role, necessary for photosynthetic and respiratory growth. This is HTH-type transcriptional regulator PetP (petP) from Rhodobacter capsulatus (strain ATCC BAA-309 / NBRC 16581 / SB1003).